Consider the following 91-residue polypeptide: Small integral membrane protein 13 (91 aa).

The helical transmembrane segment at 10–30 (LVFVATLLIVLLLMVCGWYFV) threads the bilayer. The tract at residues 47–91 (DTGSQEGDHEPSGSETEEDTSSSPHRIRSARQRRAPADEGHRPLT) is disordered. Phosphoserine is present on residues Ser-58 and Ser-60. Thr-62 carries the post-translational modification Phosphothreonine. Ser-69 is subject to Phosphoserine. Positions 71–80 (HRIRSARQRR) are enriched in basic residues. The segment covering 81–91 (APADEGHRPLT) has biased composition (basic and acidic residues).

It belongs to the SMIM13 family.

It localises to the membrane. In Homo sapiens (Human), this protein is Small integral membrane protein 13 (SMIM13).